A 744-amino-acid chain; its full sequence is MQKEMKMIKDEDVHFDLAVKKTPSFPHCLQPVASRGKAPQRHPFPEALRGPFSQFRYEPPPGDLDGFPGVFEGAGSRKRKSMPTKMPYNHPAEEVTLALHSEENKNHGLPNLPLLFPQPPRPKYDSQMIDLCNVGFQFYRSLEHFGGKPVKQEPIKPSAVWPQPTPTPFLPTPYPYYPKVHPGLMFPFFVPSSSPFPFSRHTFLPKQPPEPLLPRKAEPQESEETKQKVERVDVNVQIDDSYYVDVGGSQKRWQCPTCEKSYTSKYNLVTHILGHSGIKPHACTHCGKLFKQLSHLHTHMLTHQGTRPHKCQVCHKAFTQTSHLKRHMMQHSEVKPHNCRVCGRGFAYPSELKAHEAKHASGRENICVECGLDFPTLAQLKRHLTTHRGPIQYNCSECDKTFQYPSQLQNHMMKHKDIRPYICSECGMEFVQPHHLKQHSLTHKGVKEHKCGICGREFTLLANMKRHVLIHTNIRAYQCHLCYKSFVQKQTLKAHMIVHSDVKPFKCKLCGKEFNRMHNLMGHMHLHSDSKPFKCLYCPSKFTLKGNLTRHMKVKHGVMERGLHSQGLGRGRIALAQTAGVLRSLEQEEPFDLSQKRRAKVPVFQSDGESAQGSHCHEEEEEDNCYEVEPYSPGLAPQSQQLCTPEDLSTKSEHAPEVLEEACKEEKEDASKGEWEKRSKGDLGAEGGQERDCAGRDECLSLRAFQSTRRGPSFSDYLYFKHRDESLKELLERKMEKQAVLLGI.

Positions 206–228 (KQPPEPLLPRKAEPQESEETKQK) are disordered. Basic and acidic residues predominate over residues 213 to 228 (LPRKAEPQESEETKQK). 11 consecutive C2H2-type zinc fingers follow at residues 253–275 (WQCP…ILGH), 281–303 (HACT…MLTH), 309–331 (HKCQ…MMQH), 337–359 (HNCR…EAKH), 365–387 (NICV…LTTH), 393–415 (YNCS…MMKH), 421–443 (YICS…SLTH), 449–471 (HKCG…VLIH), 477–499 (YQCH…MIVH), 505–527 (FKCK…MHLH), and 533–556 (FKCL…KVKH). Residues 455 to 744 (GREFTLLANM…MEKQAVLLGI (290 aa)) form an interaction with NRIP1 region. A PXDLS motif is present at residues 590 to 594 (PFDLS). 2 disordered regions span residues 603-627 (VFQS…NCYE) and 664-692 (KEEK…QERD).

As to quaternary structure, interacts with ESR1 and NRIP1. Interacts (via PXDLS motif) with CTBP1. Expressed in immature and mature dendritic cells (DCs). Not detected in other blood cell types.

It is found in the nucleus. Its function is as follows. Has transcriptional repression activity. Acts as a corepressor of ESR1; the function seems to involve CTBP1 and histone deacetylases. This is Zinc finger protein 366 from Homo sapiens (Human).